The primary structure comprises 369 residues: 2-aminoethylphosphonate--pyruvate transaminase (369 aa).

Lys193 carries the post-translational modification N6-(pyridoxal phosphate)lysine.

Belongs to the class-V pyridoxal-phosphate-dependent aminotransferase family. PhnW subfamily. In terms of assembly, homodimer. Pyridoxal 5'-phosphate is required as a cofactor.

It carries out the reaction (2-aminoethyl)phosphonate + pyruvate = phosphonoacetaldehyde + L-alanine. Functionally, involved in phosphonate degradation. In Burkholderia mallei (strain NCTC 10247), this protein is 2-aminoethylphosphonate--pyruvate transaminase.